The following is a 300-amino-acid chain: Acetylglutamate kinase (300 aa).

Substrate is bound by residues 68–69, arginine 90, and asparagine 195; that span reads GG.

This sequence belongs to the acetylglutamate kinase family. ArgB subfamily.

The protein localises to the cytoplasm. The catalysed reaction is N-acetyl-L-glutamate + ATP = N-acetyl-L-glutamyl 5-phosphate + ADP. The protein operates within amino-acid biosynthesis; L-arginine biosynthesis; N(2)-acetyl-L-ornithine from L-glutamate: step 2/4. In terms of biological role, catalyzes the ATP-dependent phosphorylation of N-acetyl-L-glutamate. This Halorhodospira halophila (strain DSM 244 / SL1) (Ectothiorhodospira halophila (strain DSM 244 / SL1)) protein is Acetylglutamate kinase.